The following is a 697-amino-acid chain: Polyribonucleotide nucleotidyltransferase (697 aa).

Residues Asp487 and Asp493 each contribute to the Mg(2+) site. A KH domain is found at 554–613 (PRIETIQIKPSKIAVVIGPGGKQIRAIIEQTGVQIDIDDTGLVNIAAIDLVSIEKAKAII). One can recognise an S1 motif domain in the interval 623 to 691 (GRIYSGKAIS…ERGQIKLSRK (69 aa)).

It belongs to the polyribonucleotide nucleotidyltransferase family. It depends on Mg(2+) as a cofactor.

It localises to the cytoplasm. The catalysed reaction is RNA(n+1) + phosphate = RNA(n) + a ribonucleoside 5'-diphosphate. In terms of biological role, involved in mRNA degradation. Catalyzes the phosphorolysis of single-stranded polyribonucleotides processively in the 3'- to 5'-direction. This chain is Polyribonucleotide nucleotidyltransferase, found in Protochlamydia amoebophila (strain UWE25).